Here is a 393-residue protein sequence, read N- to C-terminus: Riboflavin biosynthesis protein RibBA (393 aa).

Residues 1–200 (MEFDEIKDAL…IESLVNYQKD (200 aa)) form a DHBP synthase region. D-ribulose 5-phosphate-binding positions include 27 to 28 (RE), D32, 139 to 143 (RTGHT), and E163. E28 serves as a coordination point for Mg(2+). H142 contributes to the Mg(2+) binding site. The GTP cyclohydrolase II stretch occupies residues 201–393 (KDTSVELKAK…TKKIKMGHLI (193 aa)). GTP is bound at residue 249 to 253 (RIHSA). C254, C265, and C267 together coordinate Zn(2+). GTP-binding positions include Q270, 291-293 (EGR), and T313. The active-site Proton acceptor; for GTP cyclohydrolase activity is D325. R327 (nucleophile; for GTP cyclohydrolase activity) is an active-site residue. 2 residues coordinate GTP: S348 and K353.

It in the N-terminal section; belongs to the DHBP synthase family. This sequence in the C-terminal section; belongs to the GTP cyclohydrolase II family. Requires Mg(2+) as cofactor. Mn(2+) serves as cofactor. It depends on Zn(2+) as a cofactor.

It catalyses the reaction D-ribulose 5-phosphate = (2S)-2-hydroxy-3-oxobutyl phosphate + formate + H(+). The catalysed reaction is GTP + 4 H2O = 2,5-diamino-6-hydroxy-4-(5-phosphoribosylamino)-pyrimidine + formate + 2 phosphate + 3 H(+). The protein operates within cofactor biosynthesis; riboflavin biosynthesis; 2-hydroxy-3-oxobutyl phosphate from D-ribulose 5-phosphate: step 1/1. It functions in the pathway cofactor biosynthesis; riboflavin biosynthesis; 5-amino-6-(D-ribitylamino)uracil from GTP: step 1/4. Its function is as follows. Catalyzes the conversion of D-ribulose 5-phosphate to formate and 3,4-dihydroxy-2-butanone 4-phosphate. Catalyzes the conversion of GTP to 2,5-diamino-6-ribosylamino-4(3H)-pyrimidinone 5'-phosphate (DARP), formate and pyrophosphate. This chain is Riboflavin biosynthesis protein RibBA, found in Staphylococcus haemolyticus (strain JCSC1435).